Reading from the N-terminus, the 247-residue chain is uncharacterized protein (247 aa).

NADP(+) is bound at residue 4-28 (ALVTGGSRGIGRATALLLAQEGYTV). Serine 142 contacts substrate. The active-site Proton acceptor is the tyrosine 156.

This sequence belongs to the short-chain dehydrogenases/reductases (SDR) family.

This is an uncharacterized protein from Escherichia coli (strain K12).